The sequence spans 402 residues: uncharacterized protein (402 aa).

Topologically, residues 1 to 11 are cytoplasmic; the sequence is MTPSNYQRTRW. The helical transmembrane segment at 12-34 threads the bilayer; sequence LTLIGTIITQFALGSVYTWSLFN. Residues 35-43 are Periplasmic-facing; sequence GALSAKLDA. A helical transmembrane segment spans residues 44-66; that stretch reads PVSQVAFSFGLLSLGLAISSSVA. The Cytoplasmic segment spans residues 67 to 72; that stretch reads GKLQER. Residues 73–95 form a helical membrane-spanning segment; sequence FGVKRVTMASGILLGLGFFLTAH. Residues 96 to 99 are Periplasmic-facing; it reads SDNL. The chain crosses the membrane as a helical span at residues 100 to 122; the sequence is MMLWLSAGVLVGLADGAGYLLTL. Residues 123–134 lie on the Cytoplasmic side of the membrane; it reads SNCVKWFPERKG. The helical transmembrane segment at 135–154 threads the bilayer; the sequence is LISAFAIGSYGLGSLGFKFI. The Periplasmic segment spans residues 155–168; it reads DTQLLETVGLEKTF. A helical transmembrane segment spans residues 169–186; the sequence is VIWGAIALLMIVFGATLM. Residues 187–216 are Cytoplasmic-facing; it reads KDAPKQEVKTSNGVVEKDYTLAESMRKPQY. A helical membrane pass occupies residues 217–236; the sequence is WMLAVMFLTACMSGLYVIGV. Residues 237–250 are Periplasmic-facing; sequence AKDIAQSLAHLDVV. A helical transmembrane segment spans residues 251-273; that stretch reads SAANAVTVISIANLSGRLVLGIL. Topologically, residues 274-279 are cytoplasmic; the sequence is SDKIAR. A helical transmembrane segment spans residues 280-302; that stretch reads IRVITIGQVISLVGMAALLFAPL. Over 303 to 306 the chain is Periplasmic; sequence NAVT. Residues 307-329 traverse the membrane as a helical segment; sequence FFAAIACVAFNFGGTITVFPSLV. Topologically, residues 330-341 are cytoplasmic; it reads SEFFGLNNLAKN. Residues 342–364 traverse the membrane as a helical segment; that stretch reads YGVIYLGFGIGSICGSIIASLFG. The Periplasmic segment spans residues 365–367; the sequence is GFY. A helical membrane pass occupies residues 368–387; that stretch reads VTFYVIFALLILSLALSTTI. Topologically, residues 388-402 are cytoplasmic; that stretch reads RQPEQKMLREAHGSL.

This sequence belongs to the major facilitator superfamily. In terms of assembly, interacts with BtsS and YpdA.

The protein resides in the cell inner membrane. Its function is as follows. Part of a nutrient-sensing regulatory network composed of the two-component regulatory systems BtsS/BtsR and YpdA/YpdB, and their respective target proteins, BtsT and YhjX. This is an uncharacterized protein from Escherichia coli (strain K12).